A 121-amino-acid polypeptide reads, in one-letter code: MASCSTSGTCGSSCCQPSCCETSCCQPSCCQTSSCGTGCGIGGGIGYGQEGSGGSVSTRIRWCHPDCHVEGTCLPPCYLVSCTPPSCCQLHHAEASCCRPSYCGQSCCRPACCCHCCEPTC.

Belongs to the KRTAP type 1 family. In terms of assembly, interacts with hair keratins. As to expression, expressed in the middle/upper portions of the hair cortex, in the region termed the keratogenous zone.

In the hair cortex, hair keratin intermediate filaments are embedded in an interfilamentous matrix, consisting of hair keratin-associated proteins (KRTAP), which are essential for the formation of a rigid and resistant hair shaft through their extensive disulfide bond cross-linking with abundant cysteine residues of hair keratins. The matrix proteins include the high-sulfur and high-glycine-tyrosine keratins. The protein is Keratin-associated protein 1-4 (KRTAP1-4) of Homo sapiens (Human).